The following is a 387-amino-acid chain: Alkanesulfonate monooxygenase (387 aa).

Positions 365–387 (HNSGPFGETVGNDYRPSRLASQS) are disordered.

This sequence belongs to the SsuD family.

It catalyses the reaction an alkanesulfonate + FMNH2 + O2 = an aldehyde + FMN + sulfite + H2O + 2 H(+). Functionally, catalyzes the desulfonation of aliphatic sulfonates. This Bradyrhizobium diazoefficiens (strain JCM 10833 / BCRC 13528 / IAM 13628 / NBRC 14792 / USDA 110) protein is Alkanesulfonate monooxygenase.